The chain runs to 504 residues: Probable alpha-L-arabinofuranosidase C (504 aa).

N-linked (GlcNAc...) asparagine glycans are attached at residues asparagine 152, asparagine 181, asparagine 269, and asparagine 467.

This sequence belongs to the glycosyl hydrolase 51 family.

The protein localises to the secreted. The catalysed reaction is Hydrolysis of terminal non-reducing alpha-L-arabinofuranoside residues in alpha-L-arabinosides.. It functions in the pathway glycan metabolism; L-arabinan degradation. Functionally, alpha-L-arabinofuranosidase involved in the degradation of arabinoxylan, a major component of plant hemicellulose. Acts only on small linear 1,5-alpha-linked L-arabinofuranosyl oligosaccharides. This chain is Probable alpha-L-arabinofuranosidase C (abfC), found in Aspergillus terreus (strain NIH 2624 / FGSC A1156).